The following is a 486-amino-acid chain: Glutamyl-tRNA(Gln) amidotransferase subunit A (486 aa).

Active-site charge relay system residues include lysine 78 and serine 153. The active-site Acyl-ester intermediate is serine 177.

The protein belongs to the amidase family. GatA subfamily. As to quaternary structure, heterotrimer of A, B and C subunits.

The catalysed reaction is L-glutamyl-tRNA(Gln) + L-glutamine + ATP + H2O = L-glutaminyl-tRNA(Gln) + L-glutamate + ADP + phosphate + H(+). Allows the formation of correctly charged Gln-tRNA(Gln) through the transamidation of misacylated Glu-tRNA(Gln) in organisms which lack glutaminyl-tRNA synthetase. The reaction takes place in the presence of glutamine and ATP through an activated gamma-phospho-Glu-tRNA(Gln). This is Glutamyl-tRNA(Gln) amidotransferase subunit A from Syntrophobacter fumaroxidans (strain DSM 10017 / MPOB).